The chain runs to 317 residues: Melanocyte-stimulating hormone receptor (317 aa).

The Extracellular portion of the chain corresponds to 1–37 (MPVQGSQRRLLGSLNSTPTATPRLGLAANQTGARCLE). N-linked (GlcNAc...) asparagine glycosylation is present at asparagine 29. A helical membrane pass occupies residues 38 to 63 (VSIPDGLFLSLGLVSLVENVLVVVAI). At 64–72 (ARNRNLHSP) the chain is on the cytoplasmic side. Residues 73–93 (MYCFICCLALSDLLVSGSNML) form a helical membrane-spanning segment. Over 94–118 (ETAVFLLLEAGALAARAAVVQQLDN) the chain is Extracellular. The helical transmembrane segment at 119–140 (VIDVITCSSMLSSLCFLGAIAV) threads the bilayer. The Cytoplasmic portion of the chain corresponds to 141 to 163 (DRYISIFYALRYHSIVTLRRARR). Residues 164–183 (VVAAIWVASVLFSTLFIAYC) traverse the membrane as a helical segment. At 184-191 (DHAAVLLC) the chain is on the extracellular side. A helical transmembrane segment spans residues 192 to 211 (LVVFFLAMLVLMAVLYVHML). Topologically, residues 212 to 240 (ARACQHAQGIAQLHKRQRPAHQGVGLKGA) are cytoplasmic. The helical transmembrane segment at 241–266 (ATLTILLGIFFLCWGPFFLHLTLIVL) threads the bilayer. Residues 267–279 (CPQHPTCSCIFKN) lie on the Extracellular side of the membrane. Residues 280–300 (FNLFLTLIICNAIIDPLIYAF) form a helical membrane-spanning segment. Topologically, residues 301–317 (RSQELRRTLKKVLLCSW) are cytoplasmic. Cysteine 315 is lipidated: S-palmitoyl cysteine.

It belongs to the G-protein coupled receptor 1 family. In terms of assembly, interacts with MGRN1, but does not undergo MGRN1-mediated ubiquitination; this interaction competes with GNAS-binding and thus inhibits agonist-induced cAMP production. Interacts with OPN3; the interaction results in a decrease in MC1R-mediated cAMP signaling and ultimately a decrease in melanin production in melanocytes.

It localises to the cell membrane. In terms of biological role, receptor for MSH (alpha, beta and gamma) and ACTH. The activity of this receptor is mediated by G proteins which activate adenylate cyclase. Mediates melanogenesis, the production of eumelanin (black/brown) and phaeomelanin (red/yellow), via regulation of cAMP signaling in melanocytes. In Trachypithecus obscurus (Dusky leaf-monkey), this protein is Melanocyte-stimulating hormone receptor (MC1R).